The following is a 137-amino-acid chain: uncharacterized protein (137 aa).

The next 2 membrane-spanning stretches (helical) occupy residues 36–52 (LAPP…PFVL) and 113–129 (FYGY…IFCF).

Its subcellular location is the membrane. This is an uncharacterized protein from Saccharomyces cerevisiae (strain ATCC 204508 / S288c) (Baker's yeast).